A 144-amino-acid chain; its full sequence is Large ribosomal subunit protein uL15 (144 aa).

Basic and acidic residues predominate over residues Met-1–Arg-13. Residues Met-1 to Gly-47 form a disordered region. The span at Asp-23 to Gln-35 shows a compositional bias: gly residues.

It belongs to the universal ribosomal protein uL15 family. As to quaternary structure, part of the 50S ribosomal subunit.

Its function is as follows. Binds to the 23S rRNA. The polypeptide is Large ribosomal subunit protein uL15 (Levilactobacillus brevis (strain ATCC 367 / BCRC 12310 / CIP 105137 / JCM 1170 / LMG 11437 / NCIMB 947 / NCTC 947) (Lactobacillus brevis)).